We begin with the raw amino-acid sequence, 167 residues long: Crossover junction endodeoxyribonuclease RuvC (167 aa).

Residues Asp-7, Glu-67, and Asp-140 contribute to the active site. 3 residues coordinate Mg(2+): Asp-7, Glu-67, and Asp-140.

This sequence belongs to the RuvC family. In terms of assembly, homodimer which binds Holliday junction (HJ) DNA. The HJ becomes 2-fold symmetrical on binding to RuvC with unstacked arms; it has a different conformation from HJ DNA in complex with RuvA. In the full resolvosome a probable DNA-RuvA(4)-RuvB(12)-RuvC(2) complex forms which resolves the HJ. Mg(2+) serves as cofactor.

The protein resides in the cytoplasm. The catalysed reaction is Endonucleolytic cleavage at a junction such as a reciprocal single-stranded crossover between two homologous DNA duplexes (Holliday junction).. In terms of biological role, the RuvA-RuvB-RuvC complex processes Holliday junction (HJ) DNA during genetic recombination and DNA repair. Endonuclease that resolves HJ intermediates. Cleaves cruciform DNA by making single-stranded nicks across the HJ at symmetrical positions within the homologous arms, yielding a 5'-phosphate and a 3'-hydroxyl group; requires a central core of homology in the junction. The consensus cleavage sequence is 5'-(A/T)TT(C/G)-3'. Cleavage occurs on the 3'-side of the TT dinucleotide at the point of strand exchange. HJ branch migration catalyzed by RuvA-RuvB allows RuvC to scan DNA until it finds its consensus sequence, where it cleaves and resolves the cruciform DNA. The sequence is that of Crossover junction endodeoxyribonuclease RuvC from Dehalococcoides mccartyi (strain ATCC BAA-2100 / JCM 16839 / KCTC 5957 / BAV1).